Here is a 143-residue protein sequence, read N- to C-terminus: Ribosome-binding factor A (143 aa).

A disordered region spans residues V123–N143. The segment covering R124–A136 has biased composition (low complexity).

The protein belongs to the RbfA family. In terms of assembly, monomer. Binds 30S ribosomal subunits, but not 50S ribosomal subunits or 70S ribosomes.

The protein localises to the cytoplasm. One of several proteins that assist in the late maturation steps of the functional core of the 30S ribosomal subunit. Associates with free 30S ribosomal subunits (but not with 30S subunits that are part of 70S ribosomes or polysomes). Required for efficient processing of 16S rRNA. May interact with the 5'-terminal helix region of 16S rRNA. This is Ribosome-binding factor A from Corynebacterium urealyticum (strain ATCC 43042 / DSM 7109).